We begin with the raw amino-acid sequence, 206 residues long: KH domain-containing protein 3 (206 aa).

Residues 1–40 (MDTPRRFPTLVQLMQPKAMPVEVLGHLPKRFSWFHSEFLK) are involved in RNA binding. In terms of domain architecture, KH; atypical spans 40-103 (KNPKVVRLEV…SYQEDTIKMI (64 aa)). Basic and acidic residues predominate over residues 144–153 (GTQRSVEVRE). Residues 144–206 (GTQRSVEVRE…EDTRAPVTRL (63 aa)) are disordered. Thr145 carries the post-translational modification Phosphothreonine. Over residues 166–183 (TGTQQSLEAANQSGTQRS) the composition is skewed to polar residues. A Phosphoserine modification is found at Ser171.

This sequence belongs to the KHDC1 family. As to quaternary structure, component of the subcortical maternal complex (SCMC), at least composed of NLRP5, KHDC3L, OOEP, and TLE6. Within the complex, interacts with NLRP5, KHDC3L and TLE6. The SCMC may facilitate translocation of its components between the nuclear and cytoplasmic compartments. Forms a scaffold complex with OOEP/FLOPED, and interacts with BLM and TRIM25 at DNA replication forks. Interacts with PARP1; the interaction is increased following the formation of DNA double-strand breaks. Interacts with NUMA1.

The protein localises to the cytoplasm. Its subcellular location is the cell cortex. It localises to the nucleus. It is found in the mitochondrion. The protein resides in the cytoskeleton. The protein localises to the microtubule organizing center. Its subcellular location is the centrosome. It localises to the chromosome. Its function is as follows. Component of the subcortical maternal complex (SCMC), a multiprotein complex that plays a key role in early embryonic development. The SCMC complex is a structural constituent of cytoplasmic lattices, which consist in fibrous structures found in the cytoplasm of oocytes and preimplantation embryos. They are required to store maternal proteins critical for embryonic development, such as proteins that control epigenetic reprogramming of the preimplantation embryo, and prevent their degradation or activation. KHDC3 ensures proper spindle assembly by regulating the localization of AURKA via RHOA signaling and of PLK1 via a RHOA-independent process. Required for the localization of MAD2L1 to kinetochores to enable spindle assembly checkpoint function. As part of the OOEP-KHDC3 scaffold, recruits BLM and TRIM25 to DNA replication forks, thereby promoting the ubiquitination of BLM by TRIM25, enhancing BLM retainment at replication forks and therefore promoting stalled replication fork restart. Regulates homologous recombination-mediated DNA repair via recruitment of RAD51 to sites of DNA double-strand breaks, and sustainment of PARP1 activity, which in turn modulates downstream ATM or ATR activation. Activation of ATM or ATR in response to DNA double-strand breaks may be cell-type specific. Its role in DNA double-strand break repair is independent of its role in restarting stalled replication forks. Promotes neural stem cell neurogenesis and neuronal differentiation in the hippocampus. May regulate normal development of learning, memory and anxiety. Capable of binding RNA. This is KH domain-containing protein 3 (KHDC3L) from Macaca mulatta (Rhesus macaque).